Reading from the N-terminus, the 510-residue chain is Maturase K (510 aa).

The protein belongs to the intron maturase 2 family. MatK subfamily.

It is found in the plastid. The protein resides in the chloroplast. Its function is as follows. Usually encoded in the trnK tRNA gene intron. Probably assists in splicing its own and other chloroplast group II introns. This chain is Maturase K, found in Populus alba (White poplar).